The sequence spans 257 residues: Protein YIPF5 (257 aa).

The Cytoplasmic segment spans residues 1 to 124 (MSGFENLNTD…KVADGSIMNE (124 aa)). The segment at 75 to 106 (PASPQPFYGNNFEDEPPLLEELGINFDHIWQK) is interaction with Sec23. The chain crosses the membrane as a helical span at residues 125-145 (TDLAGPMVFCLAFGATLLLAG). Residue Lys146 is a topological domain, lumenal. Residues 147–167 (IQFGYVYGISAIGCLGMFCLL) form a helical membrane-spanning segment. The Cytoplasmic segment spans residues 168 to 173 (NLMSMT). A helical transmembrane segment spans residues 174 to 194 (GVSFGCVASVLGYCLLPMILL). Topologically, residues 195–196 (SS) are lumenal. Residues 197–217 (FAVIFSLQGMVGIILTAGIIG) traverse the membrane as a helical segment. Residues 218–236 (WCSFSASKIFISALAMEGQ) lie on the Cytoplasmic side of the membrane. Residues 237–257 (QLLVAYPCALLYGVFALISVF) form a helical membrane-spanning segment.

Belongs to the YIP1 family. In terms of assembly, interacts with the COPII coat components Sec23 (SEC23A and/or SEC23B) and Sec24 (SEC24A and/or SEC24B). Interacts with YIF1A. May interact with RAB1A. Interacts with YIPF3 and YIPF4. As to expression, ubiquitously expressed with abundant expression in pancreatic tissue, islets, beta cells, and brain. Highly expressed in coronary smooth muscles.

The protein resides in the endoplasmic reticulum membrane. Its subcellular location is the golgi apparatus. It is found in the cis-Golgi network membrane. It localises to the cytoplasmic vesicle. The protein localises to the COPII-coated vesicle. In terms of biological role, plays a role in transport between endoplasmic reticulum and Golgi. In pancreatic beta cells, required to transport proinsulin from endoplasmic reticulum into the Golgi. This Homo sapiens (Human) protein is Protein YIPF5.